A 404-amino-acid polypeptide reads, in one-letter code: S-adenosylmethionine synthase (404 aa).

His17 contributes to the ATP binding site. Asp19 is a Mg(2+) binding site. A K(+)-binding site is contributed by Glu45. L-methionine contacts are provided by Glu58 and Gln101. The segment at Gln101–Arg111 is flexible loop. ATP is bound by residues Asp172–Lys174, Arg245–Phe246, Asp254, Arg260–Lys261, Ala277, and Lys281. Position 254 (Asp254) interacts with L-methionine. Position 285 (Lys285) interacts with L-methionine.

Belongs to the AdoMet synthase family. As to quaternary structure, homotetramer; dimer of dimers. The cofactor is Mg(2+). K(+) is required as a cofactor.

Its subcellular location is the cytoplasm. The enzyme catalyses L-methionine + ATP + H2O = S-adenosyl-L-methionine + phosphate + diphosphate. It participates in amino-acid biosynthesis; S-adenosyl-L-methionine biosynthesis; S-adenosyl-L-methionine from L-methionine: step 1/1. Functionally, catalyzes the formation of S-adenosylmethionine (AdoMet) from methionine and ATP. The overall synthetic reaction is composed of two sequential steps, AdoMet formation and the subsequent tripolyphosphate hydrolysis which occurs prior to release of AdoMet from the enzyme. The sequence is that of S-adenosylmethionine synthase from Chlorobium luteolum (strain DSM 273 / BCRC 81028 / 2530) (Pelodictyon luteolum).